Consider the following 155-residue polypeptide: Peptide methionine sulfoxide reductase MsrB (155 aa).

The MsrB domain occupies 15-137; the sequence is REALIATLNA…NSVSLTFIPT (123 aa). Positions 54, 57, 103, and 106 each coordinate Zn(2+). The active-site Nucleophile is Cys126.

It belongs to the MsrB Met sulfoxide reductase family. Zn(2+) is required as a cofactor.

The catalysed reaction is L-methionyl-[protein] + [thioredoxin]-disulfide + H2O = L-methionyl-(R)-S-oxide-[protein] + [thioredoxin]-dithiol. This is Peptide methionine sulfoxide reductase MsrB from Xylella fastidiosa (strain M23).